Consider the following 329-residue polypeptide: Quinone-oxidoreductase homolog, chloroplastic (329 aa).

This sequence belongs to the zinc-containing alcohol dehydrogenase family. Quinone oxidoreductase subfamily. The transit peptide is not cleaved.

Its subcellular location is the plastid. The protein resides in the chloroplast inner membrane. This chain is Quinone-oxidoreductase homolog, chloroplastic (QOR), found in Spinacia oleracea (Spinach).